The chain runs to 61 residues: Arabinogalactan protein 15 (61 aa).

Residues 1-22 form the signal peptide; sequence MAISKASIVVLMMVIISVVASA. Gln-23 carries the post-translational modification Pyrrolidone carboxylic acid. Residues Pro-27, Pro-29, and Pro-31 each carry the 4-hydroxyproline modification. Residues Pro-27, Pro-29, and Pro-31 are each glycosylated (O-linked (Ara...) hydroxyproline). Ser-35 carries the GPI-anchor amidated serine lipid modification. The propeptide at 36–61 is removed in mature form; the sequence is SAISASFVSAGVAAVAALVFGSALRI.

This sequence belongs to the AG-peptide AGP family. Post-translationally, contains 4-hydroxyproline; hydroxylated on Pro-27, Pro-29 and Pro-31. O-glycosylated on hydroxyprolines; noncontiguous hydroxylproline residues are glycosylated with arabinogalactan. As to expression, expressed in reproductive tissues. Expressed in chalaza, funiculus, stigma, septum, style, integument and transmitting tract.

The protein resides in the cell membrane. Functionally, proteoglycan that seems to be implicated in diverse developmental roles such as differentiation, cell-cell recognition, embryogenesis and programmed cell death. In Arabidopsis thaliana (Mouse-ear cress), this protein is Arabinogalactan protein 15.